The chain runs to 140 residues: MQPSPDSPAPLNVTVPFDSELGLQFTELGPDGARAQLDVRPKLLQLTGVVHGGVYCAMIESIASMAAFAWLNSHGEGGSVVGVNNNTDFVRSISSGMVYGTAEPLHRGRRQQLWLVTITDDTDRVVARGQVRLQNLEARP.

The protein belongs to the thioesterase PaaI family.

This is Putative esterase MT1895 from Mycobacterium tuberculosis (strain CDC 1551 / Oshkosh).